Consider the following 478-residue polypeptide: Zinc metalloproteinase/disintegrin (478 aa).

Residues 1-20 form the signal peptide; it reads MIQVLLVTICLAAFPYQGSS. A propeptide spanning residues 21 to 187 is cleaved from the precursor; sequence IILESGNVND…PIKKASHLNL (167 aa). The region spanning 193-389 is the Peptidase M12B domain; that stretch reads RYVEIVIVVD…QKPQCILKKP (197 aa). 3 disulfide bridges follow: Cys304–Cys384, Cys344–Cys368, and Cys346–Cys351. Residue His329 participates in Zn(2+) binding. The active site involves Glu330. Residues His333 and His339 each coordinate Zn(2+). Residues 390-408 constitute a propeptide that is removed on maturation; it reads LRTDTVSTPVSGNELLEAR. In terms of domain architecture, Disintegrin spans 397–478; the sequence is TPVSGNELLE…ADCPRNVLYG (82 aa). 6 disulfides stabilise this stretch: Cys411/Cys420, Cys413/Cys421, Cys426/Cys440, Cys434/Cys464, Cys439/Cys443, and Cys452/Cys471. The propeptide occupies 474-478; sequence NVLYG.

It belongs to the venom metalloproteinase (M12B) family. P-II subfamily. P-IIa sub-subfamily. Zn(2+) is required as a cofactor. In terms of tissue distribution, expressed by the venom gland.

Its subcellular location is the secreted. In terms of biological role, snake venom zinc metalloproteinase that causes hemorrhage by provoking the degradation of the sub-endothelial matrix proteins (fibronectin, laminin, type IV collagen, nidogen, and gelatins). Functionally, displays low cytotoxicity. In vitro, inhibits cancer cell migration (human breast cancer cell line MDA-MB-231) with a significant rate after 24 hours of incubation. The protein is Zinc metalloproteinase/disintegrin (MPII) of Crotalus durissus collilineatus (Brazilian rattlesnake).